Reading from the N-terminus, the 454-residue chain is LETM1 domain-containing protein YLH47, mitochondrial (454 aa).

A mitochondrion-targeting transit peptide spans methionine 1–tryptophan 45. Over asparagine 46–arginine 136 the chain is Mitochondrial intermembrane. Residues glutamate 51–valine 73 are disordered. Residues leucine 137–leucine 157 form a helical membrane-spanning segment. Residues lysine 158–lysine 454 are Mitochondrial matrix-facing. The Letm1 RBD domain maps to lysine 177–aspartate 371. Residues glutamate 376–leucine 423 adopt a coiled-coil conformation. Composition is skewed to basic and acidic residues over residues glutamate 420–isoleucine 430 and valine 437–lysine 454. The segment at glutamate 420–lysine 454 is disordered.

As to quaternary structure, associates with the mitochondrial ribosomes.

Its subcellular location is the mitochondrion inner membrane. Involved in mitochondrial potassium homeostasis through the mitochondrial K(+)/H(+) exchange regulation. The protein is LETM1 domain-containing protein YLH47, mitochondrial (YLH47) of Saccharomyces cerevisiae (strain ATCC 204508 / S288c) (Baker's yeast).